The primary structure comprises 188 residues: Trafficking protein particle complex subunit 5 (188 aa).

Ser-10 carries the phosphoserine modification.

The protein belongs to the TRAPP small subunits family. BET3 subfamily. In terms of assembly, component of the multisubunit TRAPP (transport protein particle) complex, which includes at least TRAPPC2, TRAPPC2L, TRAPPC3, TRAPPC3L, TRAPPC4, TRAPPC5, TRAPPC8, TRAPPC9, TRAPPC10, TRAPPC11 and TRAPPC12.

It is found in the golgi apparatus. Its subcellular location is the cis-Golgi network. It localises to the endoplasmic reticulum. Its function is as follows. May play a role in vesicular transport from endoplasmic reticulum to Golgi. The sequence is that of Trafficking protein particle complex subunit 5 (TRAPPC5) from Bos taurus (Bovine).